We begin with the raw amino-acid sequence, 101 residues long: B3 domain-containing protein At1g08985 (101 aa).

The TF-B3 DNA-binding region spans 7–101; the sequence is IVKTLSETDC…WQNTKFIFSM (95 aa).

It localises to the nucleus. This is B3 domain-containing protein At1g08985 from Arabidopsis thaliana (Mouse-ear cress).